Here is a 340-residue protein sequence, read N- to C-terminus: MYRNWTELIKPHTIELGGDETEIQRKATLVAEPLERGFGTTLGNALRRVLLSSLQGAAVSTVRIEGVLHEFSSVPGVIEDVTDIILNIKGLALRMESTGIKNIYLRVDKEGPVTAGMIECETGIEILNPDHHIATLNKSGTLDITMTVTTGKGYVRAQLNREDESYAIGDIPIDASYNPVKKVAYRVENARVGQQTDYDKLIMDIETNGVVTPEDALALAAKILQDQLNPFINFDDVPTAHDHEMEDRPQWNPNLFRKVDELELSVRSANCLKNDDIVYIGDLVQKSESEMLKTPNFGRKSLNEIKEVLDEMGLSLGMTLDTWPPENIDDLSKQFEEENF.

An alpha N-terminal domain (alpha-NTD) region spans residues 1–235 (MYRNWTELIK…DQLNPFINFD (235 aa)). The alpha C-terminal domain (alpha-CTD) stretch occupies residues 251-340 (WNPNLFRKVD…LSKQFEEENF (90 aa)).

Belongs to the RNA polymerase alpha chain family. As to quaternary structure, homodimer. The RNAP catalytic core consists of 2 alpha, 1 beta, 1 beta' and 1 omega subunit. When a sigma factor is associated with the core the holoenzyme is formed, which can initiate transcription.

The catalysed reaction is RNA(n) + a ribonucleoside 5'-triphosphate = RNA(n+1) + diphosphate. Its function is as follows. DNA-dependent RNA polymerase catalyzes the transcription of DNA into RNA using the four ribonucleoside triphosphates as substrates. This Magnetococcus marinus (strain ATCC BAA-1437 / JCM 17883 / MC-1) protein is DNA-directed RNA polymerase subunit alpha.